Consider the following 224-residue polypeptide: Propanediol dehydratase medium subunit (224 aa).

Positions 1–18 (MEINEKLLRQIIEDVLSE) are targets protein to the BMC.

Belongs to the diol/glycerol dehydratase medium subunit family. In terms of assembly, the propanediol dehydratase enzyme is a heterotrimeric complex composed of a large (PduC), a medium (PduD) and a small (PduE) subunit. Requires adenosylcob(III)alamin as cofactor.

The protein localises to the bacterial microcompartment. It catalyses the reaction propane-1,2-diol = propanal + H2O. It participates in polyol metabolism; 1,2-propanediol degradation. In terms of biological role, part of the PduCDE complex that catalyzes the dehydration of 1,2-propanediol (1,2-PD) to propionaldehyde. This subunit is directly targeted to the bacterial microcompartment (BMC). Expression of a cosmid containing the full 21-gene pdu operon in E.coli allows E.coli to grow on 1,2-propanediol (1,2-PD) with the appearance of BMCs in its cytoplasm. Its function is as follows. The 1,2-PD-specific bacterial microcompartment (BMC) concentrates low levels of 1,2-PD catabolic enzymes, concentrates volatile reaction intermediates thus enhancing pathway flux and keeps the level of toxic, mutagenic propionaldehyde low. In Citrobacter freundii, this protein is Propanediol dehydratase medium subunit.